A 283-amino-acid polypeptide reads, in one-letter code: Chromatin modification-related protein png1 (283 aa).

Residues Y137–A171 show a composition bias toward low complexity. The tract at residues Y137–E224 is disordered. Residues Y181–E216 show a composition bias toward polar residues. A PHD-type zinc finger spans residues E228–Q277. Zn(2+) is bound by residues C231, C233, C244, C249, H255, C258, C271, and C274.

The protein belongs to the ING family. In terms of assembly, interacts with H3K4me3 and to a lesser extent with H3K4me2. Component of a histone deacetylase complex.

It is found in the nucleus. Its function is as follows. Component of a histone deacetylase complex responsible for the deacetylation of lysine residues on the N-terminal part of the core histones (H2A, H2B, H3 and H4). Histone deacetylation gives a tag for epigenetic repression and plays an important role in transcriptional regulation, cell cycle progression and developmental events. Has a role in silencing of mating type genes. The protein is Chromatin modification-related protein png1 (png1) of Schizosaccharomyces pombe (strain 972 / ATCC 24843) (Fission yeast).